We begin with the raw amino-acid sequence, 402 residues long: Ferrochelatase, mitochondrial (402 aa).

Residues 1–33 (MAAAGRAARPLVAGGRQLRVPLRWRGQVAAAAP) constitute a mitochondrion transit peptide. 3 residues coordinate protoporphyrin IX: Arg94, Tyr102, and Ser109. Cys175 is a [2Fe-2S] cluster binding site. Active-site residues include His209 and Asp362. [2Fe-2S] cluster-binding residues include Cys382, Cys385, and Cys390.

This sequence belongs to the ferrochelatase family. As to quaternary structure, homodimer. Homotetramer. [2Fe-2S] cluster is required as a cofactor.

Its subcellular location is the mitochondrion inner membrane. The enzyme catalyses heme b + 2 H(+) = protoporphyrin IX + Fe(2+). It functions in the pathway porphyrin-containing compound metabolism; protoheme biosynthesis; protoheme from protoporphyrin-IX: step 1/1. In terms of biological role, catalyzes the ferrous insertion into protoporphyrin IX. The chain is Ferrochelatase, mitochondrial from Gallus gallus (Chicken).